The primary structure comprises 793 residues: Phenylalanine--tRNA ligase beta subunit (793 aa).

One can recognise a tRNA-binding domain in the interval 39 to 148; it reads AGQFTHVIVA…DEAPIGMDLR (110 aa). The region spanning 401–477 is the B5 domain; that stretch reads PGTVSFLFDT…RLYGYDKLQA (77 aa). The Mg(2+) site is built by aspartate 455, aspartate 461, glutamate 464, and glutamate 465. An FDX-ACB domain is found at 698–792; the sequence is SKYPQIRRDL…LENEFSILLR (95 aa).

This sequence belongs to the phenylalanyl-tRNA synthetase beta subunit family. Type 1 subfamily. As to quaternary structure, tetramer of two alpha and two beta subunits. Mg(2+) serves as cofactor.

Its subcellular location is the cytoplasm. The catalysed reaction is tRNA(Phe) + L-phenylalanine + ATP = L-phenylalanyl-tRNA(Phe) + AMP + diphosphate + H(+). The sequence is that of Phenylalanine--tRNA ligase beta subunit from Legionella pneumophila (strain Lens).